The chain runs to 267 residues: Tryptophan 2,3-dioxygenase (267 aa).

Residues 44-48 (FITIH) and Arg-114 each bind substrate. His-225 contributes to the heme binding site. Thr-239 provides a ligand contact to substrate.

It belongs to the tryptophan 2,3-dioxygenase family. As to quaternary structure, homotetramer. Heme is required as a cofactor.

It catalyses the reaction L-tryptophan + O2 = N-formyl-L-kynurenine. The protein operates within amino-acid degradation; L-tryptophan degradation via kynurenine pathway; L-kynurenine from L-tryptophan: step 1/2. Its function is as follows. Heme-dependent dioxygenase that catalyzes the oxidative cleavage of the L-tryptophan (L-Trp) pyrrole ring and converts L-tryptophan to N-formyl-L-kynurenine. Catalyzes the oxidative cleavage of the indole moiety. The sequence is that of Tryptophan 2,3-dioxygenase from Nocardioides sp. (strain ATCC BAA-499 / JS614).